The primary structure comprises 1105 residues: Serine/threonine-protein kinase Warts (1105 aa).

Residues valine 33 to arginine 54 are compositionally biased toward polar residues. Disordered regions lie at residues valine 33–valine 81, cysteine 145–glycine 253, glycine 273–arginine 362, glutamine 383–serine 462, and alanine 514–phenylalanine 643. The segment covering methionine 69–valine 81 has biased composition (pro residues). The segment covering glutamine 242 to glycine 253 has biased composition (polar residues). Over residues serine 307–serine 320 the composition is skewed to low complexity. Residues serine 325 to threonine 343 show a composition bias toward polar residues. Composition is skewed to low complexity over residues alanine 387–proline 400 and alanine 415–glutamine 437. A compositionally biased stretch (basic and acidic residues) spans glutamine 515–glutamine 533. Composition is skewed to low complexity over residues glutamine 551 to asparagine 576 and asparagine 589 to serine 616. Basic and acidic residues predominate over residues proline 627–phenylalanine 643. The region spanning phenylalanine 719–phenylalanine 1020 is the Protein kinase domain. ATP is bound by residues isoleucine 725 to valine 733 and lysine 749. Aspartate 843 functions as the Proton acceptor in the catalytic mechanism. Disordered regions lie at residues glycine 881–proline 900 and glutamate 1038–aspartate 1070. The AGC-kinase C-terminal domain occupies lysine 1021–lysine 1091.

The protein belongs to the protein kinase superfamily. AGC Ser/Thr protein kinase family. In terms of assembly, interacts with yki. Interacts with jub. Mg(2+) serves as cofactor.

The protein resides in the cytoplasm. It is found in the cytosol. Its subcellular location is the cytoskeleton. It localises to the microtubule organizing center. The protein localises to the centrosome. The enzyme catalyses L-seryl-[protein] + ATP = O-phospho-L-seryl-[protein] + ADP + H(+). It carries out the reaction L-threonyl-[protein] + ATP = O-phospho-L-threonyl-[protein] + ADP + H(+). In terms of biological role, negative regulator of Yorkie (Yki) in the Hippo/SWH (Sav/Wts/Hpo) signaling pathway that plays a pivotal role in organ size control and tumor suppression by restricting proliferation and promoting apoptosis. The core of this pathway is composed of a kinase cascade wherein Hippo (Hpo), in complex with its regulatory protein Salvador (Sav), phosphorylates and activates Warts (Wts) in complex with its regulatory protein Mats, which in turn phosphorylates and inactivates the Yorkie (Yki) oncoprotein. The Hippo/SWH signaling pathway inhibits the activity of the transcriptional complex formed by Scalloped (sd) and Yki and the target genes of this pathway include cyclin-E (cycE), diap1 and bantam. Inhibits nuclear localization of Yki. Regulates salivary gland degradation in a PI3K-dependent manner and Yki- and Sd-independent, mechanism. The polypeptide is Serine/threonine-protein kinase Warts (wts) (Drosophila melanogaster (Fruit fly)).